Here is a 329-residue protein sequence, read N- to C-terminus: Phospho-N-acetylmuramoyl-pentapeptide-transferase (329 aa).

A run of 9 helical transmembrane segments spans residues 1–21 (MLLNGIVAAVITMIITIIGIP), 53–73 (MGGFVFVVVSLVVSLVAALVF), 76–96 (FSPAFITAWWVFAMYAVIGFL), 109–129 (GLTAKQKMLAQILIGIVSYFI), 141–161 (ILSWQVNIGIFFSIFIIIWLV), 175–195 (GLASITVAISLTAYAVIAVVH), 198–218 (YDVLLIILSVIGGLLGFFVFN), 237–257 (FLAIVSILLHAEWTLLLIGAV), and 309–329 (IVFWLFTAVLSVIALCIYFAF).

The protein belongs to the glycosyltransferase 4 family. MraY subfamily. Requires Mg(2+) as cofactor.

It localises to the cell membrane. It carries out the reaction UDP-N-acetyl-alpha-D-muramoyl-L-alanyl-gamma-D-glutamyl-L-lysyl-D-alanyl-D-alanine + di-trans,octa-cis-undecaprenyl phosphate = Mur2Ac(oyl-L-Ala-gamma-D-Glu-L-Lys-D-Ala-D-Ala)-di-trans,octa-cis-undecaprenyl diphosphate + UMP. The protein operates within cell wall biogenesis; peptidoglycan biosynthesis. Its function is as follows. Catalyzes the initial step of the lipid cycle reactions in the biosynthesis of the cell wall peptidoglycan: transfers peptidoglycan precursor phospho-MurNAc-pentapeptide from UDP-MurNAc-pentapeptide onto the lipid carrier undecaprenyl phosphate, yielding undecaprenyl-pyrophosphoryl-MurNAc-pentapeptide, known as lipid I. The polypeptide is Phospho-N-acetylmuramoyl-pentapeptide-transferase (Lactococcus lactis subsp. cremoris (strain MG1363)).